A 491-amino-acid polypeptide reads, in one-letter code: La-related protein 6 (491 aa).

The disordered stretch occupies residues 1–87 (MAQSGGEARP…REDLEQEWKP (87 aa)). The residue at position 2 (alanine 2) is an N-acetylalanine. The span at 24–37 (EAEDVDELEDEEEG) shows a compositional bias: acidic residues. Serine 56 and serine 58 each carry phosphoserine. The region spanning 86-177 (KPPDEELIKK…RRTTPVPLFP (92 aa)) is the HTH La-type RNA-binding domain. The RRM domain maps to 184–296 (KMLLVYDLYL…KAVLIGMKPP (113 aa)). The Nuclear export signal motif lies at 186 to 193 (LLVYDLYL). Disordered stretches follow at residues 293-403 (MKPP…EEGR) and 423-491 (SSVT…RACV). A Nuclear localization signal motif is present at residues 296 to 302 (PKKKPAK). Residues 332–346 (DESSANSSSDPESNP) show a composition bias toward low complexity. Polar residues-rich tracts occupy residues 359-386 (NKLS…SSPL) and 444-453 (QEKSPGTSPL). One can recognise an SUZ-C domain in the interval 427 to 485 (PSGSPWVRRRRQAEMGTQEKSPGTSPLLSRKMQTADGLPVGVLRLPRGPDNTRGFHGHE). Over residues 482 to 491 (HGHERSRACV) the composition is skewed to basic and acidic residues.

As to quaternary structure, interacts (via the HTH domain) with VIM/vimentin. Interacts (via C-terminus) with non-muscle myosin MYH10. Interacts (via C-terminus) with DHX9. As to expression, expressed in numerous tissues.

It localises to the cytoplasm. It is found in the nucleus. In terms of biological role, regulates the coordinated translation of type I collagen alpha-1 and alpha-2 mRNAs, CO1A1 and CO1A2. Stabilizes mRNAs through high-affinity binding of a stem-loop structure in their 5' UTR. This regulation requires VIM and MYH10 filaments, and the helicase DHX9. In Homo sapiens (Human), this protein is La-related protein 6 (LARP6).